A 305-amino-acid polypeptide reads, in one-letter code: Glyceraldehyde-3-phosphate dehydrogenase 2, cytosolic (305 aa).

NAD(+)-binding residues include aspartate 3 and arginine 50. D-glyceraldehyde 3-phosphate-binding positions include 121–123 (SCT), threonine 152, 181–182 (TG), and arginine 204. Residue cysteine 122 is the Nucleophile of the active site. Asparagine 286 serves as a coordination point for NAD(+).

It belongs to the glyceraldehyde-3-phosphate dehydrogenase family. As to quaternary structure, homotetramer.

It is found in the cytoplasm. The catalysed reaction is D-glyceraldehyde 3-phosphate + phosphate + NAD(+) = (2R)-3-phospho-glyceroyl phosphate + NADH + H(+). It participates in carbohydrate degradation; glycolysis; pyruvate from D-glyceraldehyde 3-phosphate: step 1/5. Functionally, key enzyme in glycolysis that catalyzes the first step of the pathway by converting D-glyceraldehyde 3-phosphate (G3P) into 3-phospho-D-glyceroyl phosphate. Essential for the maintenance of cellular ATP levels and carbohydrate metabolism. In Hordeum vulgare (Barley), this protein is Glyceraldehyde-3-phosphate dehydrogenase 2, cytosolic (GAPC).